The chain runs to 204 residues: Isochorismatase domain-containing protein 2 (204 aa).

The protein belongs to the isochorismatase family. As to quaternary structure, interacts with CDKN2A.

Its subcellular location is the cytoplasm. It is found in the nucleus. In Bos taurus (Bovine), this protein is Isochorismatase domain-containing protein 2 (ISOC2).